The chain runs to 248 residues: tRNA pseudouridine synthase A 2 (248 aa).

The Nucleophile role is filled by Asp55. Tyr113 is a binding site for substrate.

The protein belongs to the tRNA pseudouridine synthase TruA family. Homodimer.

It carries out the reaction uridine(38/39/40) in tRNA = pseudouridine(38/39/40) in tRNA. Formation of pseudouridine at positions 38, 39 and 40 in the anticodon stem and loop of transfer RNAs. In Clostridium tetani (strain Massachusetts / E88), this protein is tRNA pseudouridine synthase A 2.